The following is a 143-amino-acid chain: Lysozyme C (143 aa).

A signal peptide spans 1-15; that stretch reads MRCLLLLLLVPVPGA. The C-type lysozyme domain occupies 16 to 143; that stretch reads KVFERCEWAR…LSSYVAGCGV (128 aa). 4 disulfides stabilise this stretch: cysteine 21-cysteine 141, cysteine 45-cysteine 129, cysteine 79-cysteine 94, and cysteine 90-cysteine 108. Catalysis depends on residues glutamate 50 and aspartate 67.

Belongs to the glycosyl hydrolase 22 family. In terms of assembly, monomer.

The protein resides in the secreted. It catalyses the reaction Hydrolysis of (1-&gt;4)-beta-linkages between N-acetylmuramic acid and N-acetyl-D-glucosamine residues in a peptidoglycan and between N-acetyl-D-glucosamine residues in chitodextrins.. In terms of biological role, lysozymes have primarily a bacteriolytic function; those in tissues and body fluids are associated with the monocyte-macrophage system and enhance the activity of immunoagents. This is Lysozyme C (lys) from Scophthalmus maximus (Turbot).